The chain runs to 335 residues: Anthranilate phosphoribosyltransferase (335 aa).

Residues G79, 82–83 (GD), T87, 89–92 (NVST), 107–115 (KHGSRSVSS), and S119 each bind 5-phospho-alpha-D-ribose 1-diphosphate. G79 lines the anthranilate pocket. S91 contributes to the Mg(2+) binding site. R165 is an anthranilate binding site. Mg(2+)-binding residues include D223 and E224.

The protein belongs to the anthranilate phosphoribosyltransferase family. In terms of assembly, homodimer. The cofactor is Mg(2+).

The catalysed reaction is N-(5-phospho-beta-D-ribosyl)anthranilate + diphosphate = 5-phospho-alpha-D-ribose 1-diphosphate + anthranilate. It participates in amino-acid biosynthesis; L-tryptophan biosynthesis; L-tryptophan from chorismate: step 2/5. Functionally, catalyzes the transfer of the phosphoribosyl group of 5-phosphorylribose-1-pyrophosphate (PRPP) to anthranilate to yield N-(5'-phosphoribosyl)-anthranilate (PRA). In Helicobacter pylori (strain HPAG1), this protein is Anthranilate phosphoribosyltransferase.